We begin with the raw amino-acid sequence, 407 residues long: Monooxygenase 2 (407 aa).

The protein belongs to the 3-hydroxybenzoate 6-hydroxylase family. As to quaternary structure, monomer. It depends on FAD as a cofactor. As to expression, expressed in seeds, seedlings, roots, leaves, flowers, pollen and siliques.

This Arabidopsis thaliana (Mouse-ear cress) protein is Monooxygenase 2.